The chain runs to 332 residues: Tetraacyldisaccharide 4'-kinase (332 aa).

ATP is bound at residue 60–67 (TVGGTGKT).

This sequence belongs to the LpxK family.

It carries out the reaction a lipid A disaccharide + ATP = a lipid IVA + ADP + H(+). It participates in glycolipid biosynthesis; lipid IV(A) biosynthesis; lipid IV(A) from (3R)-3-hydroxytetradecanoyl-[acyl-carrier-protein] and UDP-N-acetyl-alpha-D-glucosamine: step 6/6. In terms of biological role, transfers the gamma-phosphate of ATP to the 4'-position of a tetraacyldisaccharide 1-phosphate intermediate (termed DS-1-P) to form tetraacyldisaccharide 1,4'-bis-phosphate (lipid IVA). The protein is Tetraacyldisaccharide 4'-kinase of Pseudomonas aeruginosa (strain LESB58).